Here is a 145-residue protein sequence, read N- to C-terminus: Large ribosomal subunit protein uL15 (145 aa).

Residues methionine 1–histidine 58 form a disordered region. 2 stretches are compositionally biased toward gly residues: residues arginine 21 to serine 31 and serine 42 to glycine 52.

This sequence belongs to the universal ribosomal protein uL15 family. In terms of assembly, part of the 50S ribosomal subunit.

Its function is as follows. Binds to the 23S rRNA. The protein is Large ribosomal subunit protein uL15 of Desulforapulum autotrophicum (strain ATCC 43914 / DSM 3382 / VKM B-1955 / HRM2) (Desulfobacterium autotrophicum).